Reading from the N-terminus, the 209-residue chain is Urease accessory protein UreG (209 aa).

GTP is bound at residue 14-21; the sequence is GPVGSGKT.

This sequence belongs to the SIMIBI class G3E GTPase family. UreG subfamily. In terms of assembly, homodimer. UreD, UreF and UreG form a complex that acts as a GTP-hydrolysis-dependent molecular chaperone, activating the urease apoprotein by helping to assemble the nickel containing metallocenter of UreC. The UreE protein probably delivers the nickel.

Its subcellular location is the cytoplasm. Functionally, facilitates the functional incorporation of the urease nickel metallocenter. This process requires GTP hydrolysis, probably effectuated by UreG. The polypeptide is Urease accessory protein UreG (Rhodopseudomonas palustris (strain ATCC BAA-98 / CGA009)).